The chain runs to 303 residues: MTLTPSPTDALHGWIILDKQEGLGSTQAVSAVKRAIRIAGLPKVKVGHGGTLDPLASGVLPVALGEATKLAGYALNSDKVYAFTLAFGAETDSLDREGSITAQSDKRPTREEVESVLSCFRGEIHQIPPVYSALKINGKRACDRVRAGETVTVKGRDITIHELTLDDFSPDQATFIAKVSKGTYIRSLARDIAHKLNCYGHVSYLRRLKSGPFTSEQAISLDKLMEMAQAGKLYQMLLPLTAGLDDIPALAVSSDQAKALRQGQKLIGINAESGLNMAMESQIPVALIEVTGQEARVLRGFNF.

Asp-53 serves as the catalytic Nucleophile.

The protein belongs to the pseudouridine synthase TruB family. Type 1 subfamily.

It catalyses the reaction uridine(55) in tRNA = pseudouridine(55) in tRNA. Responsible for synthesis of pseudouridine from uracil-55 in the psi GC loop of transfer RNAs. This Zymomonas mobilis subsp. mobilis (strain ATCC 31821 / ZM4 / CP4) protein is tRNA pseudouridine synthase B.